The following is a 632-amino-acid chain: Putative acetyl-CoA decarbonylase/synthase complex subunit alpha-like (632 aa).

Residues His-200, His-226, Cys-263, Cys-379, Cys-408, and Cys-438 each contribute to the [Ni-4Fe-4S] cluster site.

This sequence belongs to the Ni-containing carbon monoxide dehydrogenase family.

Part of the ACDS complex that catalyzes the reversible cleavage of acetyl-CoA, allowing autotrophic growth from CO(2). The alpha-epsilon subcomponent functions as a carbon monoxide dehydrogenase. This chain is Putative acetyl-CoA decarbonylase/synthase complex subunit alpha-like (cdhA2), found in Methanopyrus kandleri (strain AV19 / DSM 6324 / JCM 9639 / NBRC 100938).